A 419-amino-acid polypeptide reads, in one-letter code: UDP-N-acetylglucosamine 1-carboxyvinyltransferase (419 aa).

22–23 (KN) is a phosphoenolpyruvate binding site. Arginine 91 lines the UDP-N-acetyl-alpha-D-glucosamine pocket. Cysteine 115 serves as the catalytic Proton donor. Cysteine 115 is subject to 2-(S-cysteinyl)pyruvic acid O-phosphothioketal. Residues 120–124 (RPVDL), 160–163 (KVSV), aspartate 305, and valine 327 contribute to the UDP-N-acetyl-alpha-D-glucosamine site.

Belongs to the EPSP synthase family. MurA subfamily.

It localises to the cytoplasm. The enzyme catalyses phosphoenolpyruvate + UDP-N-acetyl-alpha-D-glucosamine = UDP-N-acetyl-3-O-(1-carboxyvinyl)-alpha-D-glucosamine + phosphate. It participates in cell wall biogenesis; peptidoglycan biosynthesis. In terms of biological role, cell wall formation. Adds enolpyruvyl to UDP-N-acetylglucosamine. The sequence is that of UDP-N-acetylglucosamine 1-carboxyvinyltransferase from Salmonella gallinarum (strain 287/91 / NCTC 13346).